Here is a 65-residue protein sequence, read N- to C-terminus: 7 kDa A-type inclusion protein (65 aa).

Residues 1 to 20 are compositionally biased toward polar residues; that stretch reads MSNQNIPQLSEYQTSVSQVA. Residues 1 to 31 are disordered; that stretch reads MSNQNIPQLSEYQTSVSQVAVTPPPKPETPQ.

This chain is 7 kDa A-type inclusion protein, found in Vaccinia virus (strain Copenhagen) (VACV).